Consider the following 197-residue polypeptide: Histocompatibility antigen 60c (197 aa).

An N-terminal signal peptide occupies residues 1-17 (MALLLLILESCSAGTYA). 3 N-linked (GlcNAc...) asparagine glycosylation sites follow: Asn-51, Asn-81, and Asn-114. A lipid anchor (GPI-anchor amidated serine) is attached at Ser-177. A propeptide spans 178–197 (MACKSSPFDGLIMILLIYIL) (removed in mature form).

This sequence belongs to the NKG2D ligand family. In terms of tissue distribution, expressed in skin, and weakly in large intestine.

Its subcellular location is the cell membrane. Functionally, ligand for the KLRK1 immunosurveillance receptor. Binding to KLRK1 stimulates cell lysis in vitro. This chain is Histocompatibility antigen 60c, found in Mus musculus (Mouse).